Consider the following 502-residue polypeptide: Cytochrome P450 3A5 (502 aa).

Cysteine 441 is a binding site for heme.

Belongs to the cytochrome P450 family. Heme serves as cofactor.

The protein resides in the endoplasmic reticulum membrane. Its subcellular location is the microsome membrane. The catalysed reaction is an organic molecule + reduced [NADPH--hemoprotein reductase] + O2 = an alcohol + oxidized [NADPH--hemoprotein reductase] + H2O + H(+). The enzyme catalyses 17beta-estradiol + reduced [NADPH--hemoprotein reductase] + O2 = 2-hydroxy-17beta-estradiol + oxidized [NADPH--hemoprotein reductase] + H2O + H(+). It catalyses the reaction 17beta-estradiol + reduced [NADPH--hemoprotein reductase] + O2 = 4-hydroxy-17beta-estradiol + oxidized [NADPH--hemoprotein reductase] + H2O + H(+). It carries out the reaction estrone + reduced [NADPH--hemoprotein reductase] + O2 = 2-hydroxyestrone + oxidized [NADPH--hemoprotein reductase] + H2O + H(+). The catalysed reaction is estrone + reduced [NADPH--hemoprotein reductase] + O2 = 4-hydroxyestrone + oxidized [NADPH--hemoprotein reductase] + H2O + H(+). The enzyme catalyses testosterone + reduced [NADPH--hemoprotein reductase] + O2 = 6beta,17beta-dihydroxyandrost-4-en-3-one + oxidized [NADPH--hemoprotein reductase] + H2O + H(+). It catalyses the reaction androst-4-ene-3,17-dione + reduced [NADPH--hemoprotein reductase] + O2 = 6beta-hydroxyandrost-4-ene-3,17-dione + oxidized [NADPH--hemoprotein reductase] + H2O + H(+). It carries out the reaction progesterone + reduced [NADPH--hemoprotein reductase] + O2 = 6beta-hydroxyprogesterone + oxidized [NADPH--hemoprotein reductase] + H2O + H(+). The catalysed reaction is all-trans-retinol + reduced [NADPH--hemoprotein reductase] + O2 = all-trans-retinal + oxidized [NADPH--hemoprotein reductase] + 2 H2O + H(+). The enzyme catalyses all-trans-retinoate + reduced [NADPH--hemoprotein reductase] + O2 = all-trans-4-hydroxyretinoate + oxidized [NADPH--hemoprotein reductase] + H2O + H(+). Its pathway is steroid hormone biosynthesis. It participates in cofactor metabolism; retinol metabolism. In terms of biological role, a cytochrome P450 monooxygenase involved in the metabolism of steroid hormones and vitamins. Mechanistically, uses molecular oxygen inserting one oxygen atom into a substrate, and reducing the second into a water molecule, with two electrons provided by NADPH via cytochrome P450 reductase (NADPH--hemoprotein reductase). Catalyzes the hydroxylation of carbon-hydrogen bonds. Exhibits high catalytic activity for the formation of catechol estrogens from 17beta-estradiol (E2) and estrone (E1), namely 2-hydroxy E1 and E2. Catalyzes 6beta-hydroxylation of the steroid hormones testosterone, progesterone, and androstenedione. Catalyzes the oxidative conversion of all-trans-retinol to all-trans-retinal, a rate-limiting step for the biosynthesis of all-trans-retinoic acid (atRA). Further metabolizes all trans-retinoic acid (atRA) to 4-hydroxyretinoate and may play a role in hepatic atRA clearance. Also involved in the oxidative metabolism of xenobiotics, including calcium channel blocking drug nifedipine and immunosuppressive drug cyclosporine. This is Cytochrome P450 3A5 from Homo sapiens (Human).